The primary structure comprises 196 residues: Ribosome maturation factor RimP (196 aa).

The segment at 164–196 (LAPQKPNKPGPKKPGHDKKKPSNEPAAGKPRAE) is disordered. A compositionally biased stretch (basic residues) spans 173-182 (GPKKPGHDKK).

It belongs to the RimP family.

Its subcellular location is the cytoplasm. In terms of biological role, required for maturation of 30S ribosomal subunits. The polypeptide is Ribosome maturation factor RimP (Xanthomonas campestris pv. campestris (strain 8004)).